The following is a 465-amino-acid chain: NADH-quinone oxidoreductase subunit N (465 aa).

The next 13 helical transmembrane spans lie at 9–29 (FNFVLLFPVLSLLFWAIVLLL), 44–64 (ASIIALFSTLCFLLIYNGFVL), 73–93 (LFVSDNYAIFAQIVILVFSML), 110–130 (FLFMIASLILMISSTNLIVIF), 159–179 (YFTLAAVGAGFFVFACAFVYL), 198–218 (PILLCAGVMFLVIVGVKLSIA), 235–255 (FIAFISIVPKIAMIIVVLRIF), 265–285 (EYIVALLAIFSMLAVSIVALI), 292–312 (MLAYSSITHSSFILAVIVSSM), 327–347 (IFALFVYWISFAFANYGIFLI), 371–391 (IMLAIFILCIAGIPPFGIFWG), 405–427 (YALVFAVALSSMIMLYAYLKILI), and 444–464 (VKQKIILCLCLIGSVSCVFLL).

Belongs to the complex I subunit 2 family. As to quaternary structure, NDH-1 is composed of 14 different subunits. Subunits NuoA, H, J, K, L, M, N constitute the membrane sector of the complex.

It localises to the cell inner membrane. It catalyses the reaction a quinone + NADH + 5 H(+)(in) = a quinol + NAD(+) + 4 H(+)(out). In terms of biological role, NDH-1 shuttles electrons from NADH, via FMN and iron-sulfur (Fe-S) centers, to quinones in the respiratory chain. The immediate electron acceptor for the enzyme in this species is believed to be ubiquinone. Couples the redox reaction to proton translocation (for every two electrons transferred, four hydrogen ions are translocated across the cytoplasmic membrane), and thus conserves the redox energy in a proton gradient. The chain is NADH-quinone oxidoreductase subunit N from Campylobacter lari (strain RM2100 / D67 / ATCC BAA-1060).